We begin with the raw amino-acid sequence, 132 residues long: Protein C10 (132 aa).

N-acetylalanine is present on Ala-2.

The protein belongs to the UPF0456 family.

Its subcellular location is the cytoplasm. Functionally, in brain, may be required for corpus callosum development. In Bos taurus (Bovine), this protein is Protein C10.